The sequence spans 244 residues: Phosphonates import ATP-binding protein PhnC 2 (244 aa).

The region spanning 6 to 244 is the ABC transporter domain; the sequence is IECHNLETAY…LQAQFVVNNQ (239 aa). Residue 41 to 48 coordinates ATP; that stretch reads GLNGAGKS.

The protein belongs to the ABC transporter superfamily. Phosphonates importer (TC 3.A.1.9.1) family. The complex is composed of two ATP-binding proteins (PhnC), two transmembrane proteins (PhnE) and a solute-binding protein (PhnD).

Its subcellular location is the cell inner membrane. The enzyme catalyses phosphonate(out) + ATP + H2O = phosphonate(in) + ADP + phosphate + H(+). Part of the ABC transporter complex PhnCDE involved in phosphonates import. Responsible for energy coupling to the transport system. This is Phosphonates import ATP-binding protein PhnC 2 from Nostoc sp. (strain PCC 7120 / SAG 25.82 / UTEX 2576).